We begin with the raw amino-acid sequence, 466 residues long: Ribulose bisphosphate carboxylase large chain (466 aa).

N6,N6,N6-trimethyllysine is present on K5. Positions 114 and 164 each coordinate substrate. The Proton acceptor role is filled by K166. K168 is a binding site for substrate. Mg(2+) is bound by residues K192, D194, and E195. K192 bears the N6-carboxylysine mark. The active-site Proton acceptor is the H285. Substrate is bound by residues R286, H318, and S370.

Belongs to the RuBisCO large chain family. Type I subfamily. In terms of assembly, heterohexadecamer of 8 large chains and 8 small chains; disulfide-linked. The disulfide link is formed within the large subunit homodimers. Requires Mg(2+) as cofactor. In terms of processing, the disulfide bond which can form in the large chain dimeric partners within the hexadecamer appears to be associated with oxidative stress and protein turnover.

Its subcellular location is the plastid. It localises to the chloroplast. The catalysed reaction is 2 (2R)-3-phosphoglycerate + 2 H(+) = D-ribulose 1,5-bisphosphate + CO2 + H2O. The enzyme catalyses D-ribulose 1,5-bisphosphate + O2 = 2-phosphoglycolate + (2R)-3-phosphoglycerate + 2 H(+). Functionally, ruBisCO catalyzes two reactions: the carboxylation of D-ribulose 1,5-bisphosphate, the primary event in carbon dioxide fixation, as well as the oxidative fragmentation of the pentose substrate in the photorespiration process. Both reactions occur simultaneously and in competition at the same active site. The sequence is that of Ribulose bisphosphate carboxylase large chain from Isophysis tasmanica.